We begin with the raw amino-acid sequence, 349 residues long: DNA polymerase IV (349 aa).

The UmuC domain maps to 4–185; sequence IIHIDCDCFY…LPVAKLHGVG (182 aa). Mg(2+) is bound by residues Asp-8 and Asp-103. Residue Glu-104 is part of the active site.

The protein belongs to the DNA polymerase type-Y family. Monomer. Mg(2+) serves as cofactor.

Its subcellular location is the cytoplasm. It carries out the reaction DNA(n) + a 2'-deoxyribonucleoside 5'-triphosphate = DNA(n+1) + diphosphate. Poorly processive, error-prone DNA polymerase involved in untargeted mutagenesis. Copies undamaged DNA at stalled replication forks, which arise in vivo from mismatched or misaligned primer ends. These misaligned primers can be extended by PolIV. Exhibits no 3'-5' exonuclease (proofreading) activity. May be involved in translesional synthesis, in conjunction with the beta clamp from PolIII. The protein is DNA polymerase IV of Pseudomonas aeruginosa (strain UCBPP-PA14).